A 334-amino-acid polypeptide reads, in one-letter code: Leucine carboxyl methyltransferase 1 (334 aa).

Residues K37, R73, G98, D122, 171–172 (DL), and E198 contribute to the S-adenosyl-L-methionine site.

Belongs to the methyltransferase superfamily. LCMT family.

The catalysed reaction is [phosphatase 2A protein]-C-terminal L-leucine + S-adenosyl-L-methionine = [phosphatase 2A protein]-C-terminal L-leucine methyl ester + S-adenosyl-L-homocysteine. In terms of biological role, methylates the carboxyl group of the C-terminal leucine residue of protein phosphatase 2A catalytic subunits to form alpha-leucine ester residues. The polypeptide is Leucine carboxyl methyltransferase 1 (LCMT1) (Homo sapiens (Human)).